The chain runs to 273 residues: Putative phosphoenolpyruvate synthase regulatory protein (273 aa).

153–160 serves as a coordination point for ADP; sequence AVSRAGKT.

The protein belongs to the pyruvate, phosphate/water dikinase regulatory protein family. PSRP subfamily.

The enzyme catalyses [pyruvate, water dikinase] + ADP = [pyruvate, water dikinase]-phosphate + AMP + H(+). It catalyses the reaction [pyruvate, water dikinase]-phosphate + phosphate + H(+) = [pyruvate, water dikinase] + diphosphate. In terms of biological role, bifunctional serine/threonine kinase and phosphorylase involved in the regulation of the phosphoenolpyruvate synthase (PEPS) by catalyzing its phosphorylation/dephosphorylation. The sequence is that of Putative phosphoenolpyruvate synthase regulatory protein from Xylella fastidiosa (strain M12).